Reading from the N-terminus, the 259-residue chain is Enolase-phosphatase E1 (259 aa).

Residues Asp16 and Glu18 each coordinate Mg(2+). Substrate is bound by residues 151–152 (SS) and Lys185. Residue Asp210 participates in Mg(2+) binding.

Belongs to the HAD-like hydrolase superfamily. MasA/MtnC family. In terms of assembly, monomer. It depends on Mg(2+) as a cofactor.

It is found in the cytoplasm. The protein resides in the nucleus. It carries out the reaction 5-methylsulfanyl-2,3-dioxopentyl phosphate + H2O = 1,2-dihydroxy-5-(methylsulfanyl)pent-1-en-3-one + phosphate. It functions in the pathway amino-acid biosynthesis; L-methionine biosynthesis via salvage pathway; L-methionine from S-methyl-5-thio-alpha-D-ribose 1-phosphate: step 3/6. Its pathway is amino-acid biosynthesis; L-methionine biosynthesis via salvage pathway; L-methionine from S-methyl-5-thio-alpha-D-ribose 1-phosphate: step 4/6. Functionally, bifunctional enzyme that catalyzes the enolization of 2,3-diketo-5-methylthiopentyl-1-phosphate (DK-MTP-1-P) into the intermediate 2-hydroxy-3-keto-5-methylthiopentenyl-1-phosphate (HK-MTPenyl-1-P), which is then dephosphorylated to form the acireductone 1,2-dihydroxy-3-keto-5-methylthiopentene (DHK-MTPene). This is Enolase-phosphatase E1 (enoph1) from Xenopus tropicalis (Western clawed frog).